Here is a 428-residue protein sequence, read N- to C-terminus: E3 ubiquitin-protein ligase RNF128 (428 aa).

The signal sequence occupies residues 1-38 (MGPPLGAGVSCRGGCGSSRLLAWCFLLALSPQAPGSRG). 3 N-linked (GlcNAc...) asparagine glycosylation sites follow: Asn48, Asn59, and Asn101. The PA domain occupies 75 to 183 (SPLEPVAGVL…LKGTKILQSI (109 aa)). The chain crosses the membrane as a helical span at residues 208-228 (IFFVSVSFFIITAATVGYFIF). An RING-type; atypical zinc finger spans residues 277–318 (CAVCIELYKPNDLVRILTCNHIFHKTCVDPWLLEHRTCPMCK). A disordered region spans residues 346 to 428 (ISNSASSHEE…QETAVREIKS (83 aa)). The span at 416 to 428 (TPHQETAVREIKS) shows a compositional bias: basic and acidic residues.

Post-translationally, auto-ubiquitinated. Controls the development of T-cell clonal anergy by ubiquitination.

Its subcellular location is the cytoplasm. The protein localises to the endomembrane system. The protein resides in the cytoskeleton. It is found in the perinuclear region. The enzyme catalyses S-ubiquitinyl-[E2 ubiquitin-conjugating enzyme]-L-cysteine + [acceptor protein]-L-lysine = [E2 ubiquitin-conjugating enzyme]-L-cysteine + N(6)-ubiquitinyl-[acceptor protein]-L-lysine.. The protein operates within protein modification; protein ubiquitination. E3 ubiquitin-protein ligase that catalyzes 'Lys-27', 'Lys-48'- or 'Lys-63'-linked polyubiquitin chains formation and plays a role in different biological processes such as modulation of immune response, cytoskeletal dynamics or protein homeostasis. Inhibits IL2 and IL4 transcription, thereby playing an important role in the induction of the anergic phenotype, a long-term stable state of T-lymphocyte unresponsiveness to antigenic stimulation associated with the blockade of interleukin production. Ubiquitinates ARPC5 with 'Lys-48' linkages and COR1A with 'Lys-63' linkages leading to their degradation, down-regulation of these cytoskeletal components results in impaired lamellipodium formation and reduced accumulation of F-actin at the immunological synapse. Functions in the patterning of the dorsal ectoderm; sensitizes ectoderm to respond to neural-inducing signals. Plays a positive role in innate immune response by promoting 'Lys-63'-linked ubiquitination of TBK1 after RNA- or DNA-virus infection. Regulates alveolar macrophage activation and neutrophil infiltration by interacting with TLR4, targeting it for degradation, and inhibiting NF-kappa-B activation, hence decreasing pro-inflammatory cytokines. Negatively regulates the IL-3/STAT5 signaling pathway by facilitating 'Lys-27'-linked polyubiquitination of IL3RA leading to its degradation via lysosomal pathway. Directly regulates the N-glycosylation process in the endoplasmic reticulum by targeting the glycosyl-transferase RPN1 for ubiquitination and degradation. Other substrates targeted for degradation by RNF128 include transmembrane proteins CD40L, CD83 or the tetraspanin CD151. This Pongo abelii (Sumatran orangutan) protein is E3 ubiquitin-protein ligase RNF128 (RNF128).